Reading from the N-terminus, the 920-residue chain is Nitrate reductase [NADH] (920 aa).

The segment at 1–69 (MAASVENRQF…DTSDDEEDEA (69 aa)) is disordered. Over residues 60–69 (DTSDDEEDEA) the composition is skewed to acidic residues. Mo-molybdopterin is bound at residue cysteine 185. Positions 534 to 609 (SLTFTMSEVK…LEEYRVGELI (76 aa)) constitute a Cytochrome b5 heme-binding domain. Heme contacts are provided by histidine 569 and histidine 592. Positions 663 to 775 (REKIPCKLIS…KGPLGHIEYM (113 aa)) constitute an FAD-binding FR-type domain. Residues 715–718 (RAYT), 732–736 (LVKIY), phenylalanine 737, phenylalanine 744, 749–751 (LMS), and threonine 802 each bind FAD.

The protein belongs to the nitrate reductase family. Homodimer. FAD is required as a cofactor. It depends on heme as a cofactor. Requires Mo-molybdopterin as cofactor. As to expression, in cortical cells of roots grown at low nitrate concentrations, in vascular tissues of roots at high nitrate concentrations and in root apex under both conditions.

It catalyses the reaction nitrite + NAD(+) + H2O = nitrate + NADH + H(+). Nitrate reductase is a key enzyme involved in the first step of nitrate assimilation in plants, fungi and bacteria. The sequence is that of Nitrate reductase [NADH] (NIA) from Cichorium intybus (Chicory).